Consider the following 122-residue polypeptide: Large ribosomal subunit protein bL12 (122 aa).

It belongs to the bacterial ribosomal protein bL12 family. Homodimer. Part of the ribosomal stalk of the 50S ribosomal subunit. Forms a multimeric L10(L12)X complex, where L10 forms an elongated spine to which 2 to 4 L12 dimers bind in a sequential fashion. Binds GTP-bound translation factors.

Forms part of the ribosomal stalk which helps the ribosome interact with GTP-bound translation factors. Is thus essential for accurate translation. The chain is Large ribosomal subunit protein bL12 from Fusobacterium nucleatum subsp. nucleatum (strain ATCC 25586 / DSM 15643 / BCRC 10681 / CIP 101130 / JCM 8532 / KCTC 2640 / LMG 13131 / VPI 4355).